The following is a 145-amino-acid chain: AP-2 complex subunit sigma (145 aa).

It belongs to the adaptor complexes small subunit family. Adaptor protein complex 2 (AP-2) is a heterotetramer composed of two large adaptins (alpha-type subunit apl3 and beta-type subunit apl1), a medium chain (mu-type subunit apm4) and a small adaptin (sigma-type subunit aps2).

It is found in the cell membrane. The protein localises to the membrane. The protein resides in the coated pit. Its function is as follows. Component of the adaptor complexes which link clathrin to receptors in coated vesicles. Clathrin-associated protein complexes are believed to interact with the cytoplasmic tails of membrane proteins, leading to their selection and concentration. The polypeptide is AP-2 complex subunit sigma (aps2) (Aspergillus fumigatus (strain ATCC MYA-4609 / CBS 101355 / FGSC A1100 / Af293) (Neosartorya fumigata)).